The primary structure comprises 493 residues: 5'-3' exonuclease PLD3 (493 aa).

Topologically, residues Met1 to Ala37 are cytoplasmic. The helical; Signal-anchor for type II membrane protein transmembrane segment at Leu38–Phe58 threads the bilayer. The Lumenal segment spans residues Pro59–Phe493. Residue Asn99 is glycosylated (N-linked (GlcNAc...) asparagine). In terms of domain architecture, PLD phosphodiesterase 1 spans Thr197–Ser224. Active-site residues include His202, Lys204, and Asp209. Residues Asn237, Asn259, Asn269, Asn285, and Asn388 are each glycosylated (N-linked (GlcNAc...) asparagine). The region spanning Tyr412–Tyr438 is the PLD phosphodiesterase 2 domain. Active-site residues include His417, Lys419, and Asp424. N-linked (GlcNAc...) asparagine glycans are attached at residues Asn433, Asn450, and Asn476.

This sequence belongs to the phospholipase D family. In terms of processing, N-glycosylated. Proteolytically processed to a soluble form that is stable within endosomes and lysosomes. During transport through the secretory pathway becomes proteolysed by cysteine proteases, thereby releasing a stable soluble lysosomal lumenal polypeptide, whereas the transmembrane-bound fragment is rapidly degraded. Its transport route to lysosomes involves ubiquitination and the ESCRT complex. Post-translationally, ubiquitinated. Ubiquitination mediates sorting into lysosomes.

It localises to the endoplasmic reticulum membrane. Its subcellular location is the lysosome lumen. It is found in the early endosome membrane. The protein resides in the late endosome membrane. The protein localises to the golgi apparatus membrane. It localises to the endosome membrane. The enzyme catalyses Exonucleolytic cleavage in the 5'- to 3'-direction to yield nucleoside 3'-phosphates.. 5'-&gt;3' DNA exonuclease which digests single-stranded DNA (ssDNA). Regulates inflammatory cytokine responses via the degradation of nucleic acids, by reducing the concentration of ssDNA able to stimulate TLR9, a nucleotide-sensing receptor in collaboration with PLD4. May be important in myotube formation. Plays a role in lysosomal homeostasis. Involved in the regulation of endosomal protein sorting. The protein is 5'-3' exonuclease PLD3 (pld3) of Xenopus laevis (African clawed frog).